Here is a 321-residue protein sequence, read N- to C-terminus: L-carnitine dehydrogenase (321 aa).

An NAD(+)-binding site is contributed by 14–19; sequence GAGVIG.

Belongs to the 3-hydroxyacyl-CoA dehydrogenase family. L-carnitine dehydrogenase subfamily. In terms of assembly, homodimer.

Its subcellular location is the cytoplasm. It carries out the reaction carnitine + NAD(+) = 3-dehydrocarnitine + NADH + H(+). It functions in the pathway amine and polyamine metabolism; carnitine metabolism. Catalyzes the NAD(+)-dependent oxidation of L-carnitine to 3-dehydrocarnitine. The polypeptide is L-carnitine dehydrogenase (Burkholderia mallei (strain ATCC 23344)).